The sequence spans 115 residues: Large ribosomal subunit protein bL20 (115 aa).

This sequence belongs to the bacterial ribosomal protein bL20 family.

Its function is as follows. Binds directly to 23S ribosomal RNA and is necessary for the in vitro assembly process of the 50S ribosomal subunit. It is not involved in the protein synthesizing functions of that subunit. The protein is Large ribosomal subunit protein bL20 of Chlorobium phaeovibrioides (strain DSM 265 / 1930) (Prosthecochloris vibrioformis (strain DSM 265)).